The primary structure comprises 461 residues: Argininosuccinate lyase (461 aa).

The protein belongs to the lyase 1 family. Argininosuccinate lyase subfamily.

Its subcellular location is the cytoplasm. The enzyme catalyses 2-(N(omega)-L-arginino)succinate = fumarate + L-arginine. It participates in amino-acid biosynthesis; L-arginine biosynthesis; L-arginine from L-ornithine and carbamoyl phosphate: step 3/3. In Chloroflexus aurantiacus (strain ATCC 29366 / DSM 635 / J-10-fl), this protein is Argininosuccinate lyase.